Here is a 352-residue protein sequence, read N- to C-terminus: Glycerol-1-phosphate dehydrogenase [NAD(P)+] (352 aa).

NAD(+) contacts are provided by residues 98–102 (GKPID) and 120–123 (TAAS). D125 lines the substrate pocket. S129 provides a ligand contact to NAD(+). Residue D172 coordinates substrate. Residues D172 and H252 each contribute to the Zn(2+) site. Residue H256 coordinates substrate. H268 contributes to the Zn(2+) binding site.

It belongs to the glycerol-1-phosphate dehydrogenase family. Requires Zn(2+) as cofactor.

The protein resides in the cytoplasm. It catalyses the reaction sn-glycerol 1-phosphate + NAD(+) = dihydroxyacetone phosphate + NADH + H(+). The enzyme catalyses sn-glycerol 1-phosphate + NADP(+) = dihydroxyacetone phosphate + NADPH + H(+). It functions in the pathway membrane lipid metabolism; glycerophospholipid metabolism. In terms of biological role, catalyzes the NAD(P)H-dependent reduction of dihydroxyacetonephosphate (DHAP or glycerone phosphate) to glycerol 1-phosphate (G1P). The G1P thus generated is used as the glycerophosphate backbone of phospholipids in the cellular membranes of Archaea. This chain is Glycerol-1-phosphate dehydrogenase [NAD(P)+], found in Natronomonas pharaonis (strain ATCC 35678 / DSM 2160 / CIP 103997 / JCM 8858 / NBRC 14720 / NCIMB 2260 / Gabara) (Halobacterium pharaonis).